A 1462-amino-acid polypeptide reads, in one-letter code: FYVE, RhoGEF and PH domain-containing protein 5 (1462 aa).

Disordered stretches follow at residues 37–323, 492–512, 592–613, 670–718, 746–777, and 851–887; these read GRLP…SAEE, YVPE…APGI, SGSF…SSMV, HVDV…ASES, EDRS…YENI, and CPIS…THKV. The span at 72–82 shows a compositional bias: basic and acidic residues; the sequence is PLREDEPKDEG. 2 stretches are compositionally biased toward acidic residues: residues 95–106 and 137–151; these read SAEEEEEREEGG and EGTD…EGCA. Residues 161–177 are compositionally biased toward basic and acidic residues; sequence SRSEEEEKLVQPHRECS. 2 stretches are compositionally biased toward acidic residues: residues 211-220 and 242-255; these read GEAEEDDEEG and MGQD…EPPE. The span at 592 to 611 shows a compositional bias: polar residues; it reads SGSFSQRNHLPSSGTSTPSS. Over residues 676–685 the composition is skewed to low complexity; it reads SSSRSSSESS. The segment covering 858–887 has biased composition (basic and acidic residues); that stretch reads PKEDLTSDEEQRSSEEEDSASRDPSVTHKV. A DH domain is found at 892–1084; the sequence is RALVIAQELL…SKVTDRANDS (193 aa). The 95-residue stretch at 1113–1207 folds into the PH 1 domain; it reads EFLKEGTLMK…WYGCLSRALP (95 aa). The FYVE-type zinc-finger motif lies at 1242–1301; the sequence is VTHVMMCMNCGCDFSLTLRRHHCHACGKIVCRNCSRNKYPLKYLKDRMAKVCDGCFGELK. Zn(2+)-binding residues include Cys1248, Cys1251, Cys1264, Cys1267, Cys1272, Cys1275, Cys1293, and Cys1296. A PH 2 domain is found at 1363–1461; that stretch reads GSAISGYLSR…WIEAMEDASV (99 aa).

Expressed in endothelial cells (at protein level).

It is found in the cytoplasm. It localises to the cytoskeleton. Its subcellular location is the cell projection. The protein resides in the ruffle membrane. The protein localises to the endoplasmic reticulum. It is found in the golgi apparatus. It localises to the early endosome. Functionally, activates CDC42, a member of the Ras-like family of Rho- and Rac proteins, by exchanging bound GDP for free GTP. Mediates VEGF-induced CDC42 activation. May regulate proangiogenic action of VEGF in vascular endothelial cells, including network formation, directional movement and proliferation. May play a role in regulating the actin cytoskeleton and cell shape. In Homo sapiens (Human), this protein is FYVE, RhoGEF and PH domain-containing protein 5 (FGD5).